The following is a 96-amino-acid chain: Co-chaperonin GroES (96 aa).

Belongs to the GroES chaperonin family. As to quaternary structure, heptamer of 7 subunits arranged in a ring. Interacts with the chaperonin GroEL.

Its subcellular location is the cytoplasm. In terms of biological role, together with the chaperonin GroEL, plays an essential role in assisting protein folding. The GroEL-GroES system forms a nano-cage that allows encapsulation of the non-native substrate proteins and provides a physical environment optimized to promote and accelerate protein folding. GroES binds to the apical surface of the GroEL ring, thereby capping the opening of the GroEL channel. In Pelagibacter ubique (strain HTCC1062), this protein is Co-chaperonin GroES.